A 387-amino-acid chain; its full sequence is Succinate--CoA ligase [ADP-forming] subunit beta (387 aa).

Positions 9-236 (KELFAKHNVP…KDATDPLELK (228 aa)) constitute an ATP-grasp domain. Residues K45, 52-54 (GRG), S94, and E99 each bind ATP. Residues N191 and D205 each coordinate Mg(2+). Substrate is bound by residues N256 and 318-320 (GIT).

The protein belongs to the succinate/malate CoA ligase beta subunit family. Heterotetramer of two alpha and two beta subunits. It depends on Mg(2+) as a cofactor.

It carries out the reaction succinate + ATP + CoA = succinyl-CoA + ADP + phosphate. The enzyme catalyses GTP + succinate + CoA = succinyl-CoA + GDP + phosphate. Its pathway is carbohydrate metabolism; tricarboxylic acid cycle; succinate from succinyl-CoA (ligase route): step 1/1. Functionally, succinyl-CoA synthetase functions in the citric acid cycle (TCA), coupling the hydrolysis of succinyl-CoA to the synthesis of either ATP or GTP and thus represents the only step of substrate-level phosphorylation in the TCA. The beta subunit provides nucleotide specificity of the enzyme and binds the substrate succinate, while the binding sites for coenzyme A and phosphate are found in the alpha subunit. The chain is Succinate--CoA ligase [ADP-forming] subunit beta from Mycolicibacterium vanbaalenii (strain DSM 7251 / JCM 13017 / BCRC 16820 / KCTC 9966 / NRRL B-24157 / PYR-1) (Mycobacterium vanbaalenii).